Consider the following 727-residue polypeptide: Bromodomain-containing protein C631.02 (727 aa).

Disordered regions lie at residues 27–231 (AATI…PPMT) and 341–369 (TSYS…AAMY). Positions 56–68 (ENDDGTLDLFGDS) are enriched in acidic residues. Residues 69–78 (ELEKEQKGDN) show a composition bias toward basic and acidic residues. Over residues 102 to 114 (PSSPTHPSVSNIT) the composition is skewed to polar residues. A compositionally biased stretch (basic and acidic residues) spans 128–150 (EEEKSSESLDSHTHPPKRVRNED). The span at 153-177 (LTFSKTSPVSPSSLKDGASNTVTND) shows a compositional bias: polar residues. Residue Ser-162 is modified to Phosphoserine. Residues 206 to 231 (SKEHSSPHDETVKKEENDKDQYPPMT) show a composition bias toward basic and acidic residues. One can recognise a Bromo 1 domain in the interval 229–335 (PMTKEQHKYI…ATFERQLKQL (107 aa)). The Bromo 2 domain occupies 388–497 (RKDAAEMKFC…SIFQKLWANK (110 aa)). An NET domain is found at 570–650 (RSLSVDIYPP…KGDEIGAEAL (81 aa)). A disordered region spans residues 699 to 727 (IAAYNTKSLGSDDSSSEDDGESSESSDSA). Acidic residues predominate over residues 712–727 (SSSEDDGESSESSDSA).

It belongs to the BET family.

It is found in the nucleus. The chain is Bromodomain-containing protein C631.02 from Schizosaccharomyces pombe (strain 972 / ATCC 24843) (Fission yeast).